Here is a 398-residue protein sequence, read N- to C-terminus: tRNA(Ile)-lysidine synthase (398 aa).

25-30 (SGGVDS) contributes to the ATP binding site.

The protein belongs to the tRNA(Ile)-lysidine synthase family.

The protein resides in the cytoplasm. It carries out the reaction cytidine(34) in tRNA(Ile2) + L-lysine + ATP = lysidine(34) in tRNA(Ile2) + AMP + diphosphate + H(+). Its function is as follows. Ligates lysine onto the cytidine present at position 34 of the AUA codon-specific tRNA(Ile) that contains the anticodon CAU, in an ATP-dependent manner. Cytidine is converted to lysidine, thus changing the amino acid specificity of the tRNA from methionine to isoleucine. The chain is tRNA(Ile)-lysidine synthase from Francisella tularensis subsp. holarctica (strain OSU18).